The following is a 1461-amino-acid chain: Gag-Pro-Pol polyprotein (1461 aa).

G2 is lipidated: N-myristoyl glycine; by host. Residues P94–P97 carry the PTAP/PSAP motif motif. Residues P94–A121 form a disordered region. Residues P97–A121 show a composition bias toward pro residues. The short motif at P124–Y127 is the PPXY motif element. The PTAP/PSAP motif signature appears at P130 to T133. 2 consecutive CCHC-type zinc fingers follow at residues Q361–Q378 and G384–Q401. Residues C399–E425 form a disordered region. The Peptidase A2 domain occupies T473–A551. The active-site For protease activity; shared with dimeric partner is the D478. Positions L612–I802 constitute a Reverse transcriptase domain. Residues D678, D753, D754, D1038, E1073, D1095, D1156, D1229, and D1286 each coordinate Mg(2+). An RNase H type-1 domain is found at L1029 to V1164. Positions R1218–P1387 constitute an Integrase catalytic domain. Positions K1392–C1441 form a DNA-binding region, integrase-type.

Homodimer; the homodimers are part of the immature particles. Interacts with human TSG101 and NEDD4; these interactions are essential for budding and release of viral particles. As to quaternary structure, homodimer; further assembles as homohexamers. It depends on Mg(2+) as a cofactor. Phosphorylation of the matrix protein p19 by MAPK1 seems to play a role in budding. In terms of processing, myristoylated. Myristoylation of the matrix (MA) domain mediates the transport and binding of Gag polyproteins to the host plasma membrane and is required for the assembly of viral particles. Post-translationally, specific enzymatic cleavages by the viral protease yield mature proteins. The polyprotein is cleaved during and after budding, this process is termed maturation. The protease is autoproteolytically processed at its N- and C-termini.

The protein localises to the virion. The catalysed reaction is Endonucleolytic cleavage to 5'-phosphomonoester.. It catalyses the reaction DNA(n) + a 2'-deoxyribonucleoside 5'-triphosphate = DNA(n+1) + diphosphate. Functionally, the matrix domain targets Gag, Gag-Pro and Gag-Pro-Pol polyproteins to the plasma membrane via a multipartite membrane binding signal, that includes its myristoylated N-terminus. Matrix protein. In terms of biological role, forms the spherical core of the virus that encapsulates the genomic RNA-nucleocapsid complex. Its function is as follows. Binds strongly to viral nucleic acids and promote their aggregation. Also destabilizes the nucleic acids duplexes via highly structured zinc-binding motifs. Functionally, the aspartyl protease mediates proteolytic cleavages of Gag and Gag-Pol polyproteins during or shortly after the release of the virion from the plasma membrane. Cleavages take place as an ordered, step-wise cascade to yield mature proteins. This process is called maturation. Displays maximal activity during the budding process just prior to particle release from the cell (Potential). Cleaves the translation initiation factor eIF4G leading to the inhibition of host cap-dependent translation. RT is a multifunctional enzyme that converts the viral RNA genome into dsDNA in the cytoplasm, shortly after virus entry into the cell. This enzyme displays a DNA polymerase activity that can copy either DNA or RNA templates, and a ribonuclease H (RNase H) activity that cleaves the RNA strand of RNA-DNA heteroduplexes in a partially processive 3' to 5'-endonucleasic mode. Conversion of viral genomic RNA into dsDNA requires many steps. A tRNA-Pro binds to the primer-binding site (PBS) situated at the 5'-end of the viral RNA. RT uses the 3' end of the tRNA primer to perform a short round of RNA-dependent minus-strand DNA synthesis. The reading proceeds through the U5 region and ends after the repeated (R) region which is present at both ends of viral RNA. The portion of the RNA-DNA heteroduplex is digested by the RNase H, resulting in a ssDNA product attached to the tRNA primer. This ssDNA/tRNA hybridizes with the identical R region situated at the 3' end of viral RNA. This template exchange, known as minus-strand DNA strong stop transfer, can be either intra- or intermolecular. RT uses the 3' end of this newly synthesized short ssDNA to perform the RNA-dependent minus-strand DNA synthesis of the whole template. RNase H digests the RNA template except for a polypurine tract (PPT) situated at the 5' end of the genome. It is not clear if both polymerase and RNase H activities are simultaneous. RNase H probably can proceed both in a polymerase-dependent (RNA cut into small fragments by the same RT performing DNA synthesis) and a polymerase-independent mode (cleavage of remaining RNA fragments by free RTs). Secondly, RT performs DNA-directed plus-strand DNA synthesis using the PPT that has not been removed by RNase H as primer. PPT and tRNA primers are then removed by RNase H. The 3' and 5' ssDNA PBS regions hybridize to form a circular dsDNA intermediate. Strand displacement synthesis by RT to the PBS and PPT ends produces a blunt ended, linear dsDNA copy of the viral genome that includes long terminal repeats (LTRs) at both ends. In terms of biological role, catalyzes viral DNA integration into the host chromosome, by performing a series of DNA cutting and joining reactions. This is Gag-Pro-Pol polyprotein (gag-pro-pol) from Human T-cell leukemia virus 2 (HTLV-2).